The sequence spans 433 residues: Glucoside xylosyltransferase 1 (433 aa).

At 1 to 6 (MRRFAR) the chain is on the cytoplasmic side. The helical; Signal-anchor for type II membrane protein transmembrane segment at 7–29 (VALLFLGCGVCSLLYGVSQLALS) threads the bilayer. At 30–433 (LEQEAGGARQ…DLSVRRSKGS (404 aa)) the chain is on the lumenal side. Residues 39–64 (QRQARESAAPGGGRQAGSADGGEEGA) form a disordered region. N69, N166, N271, N305, and N380 each carry an N-linked (GlcNAc...) asparagine glycan.

The protein belongs to the glycosyltransferase 8 family.

Its subcellular location is the membrane. The catalysed reaction is 3-O-(beta-D-glucosyl)-L-seryl-[EGF-like domain protein] + UDP-alpha-D-xylose = 3-O-[alpha-D-xylosyl-(1-&gt;3)-beta-D-glucosyl]-L-seryl-[EGF-like domain protein] + UDP + H(+). In terms of biological role, glycosyltransferase which elongates the O-linked glucose attached to EGF-like repeats in the extracellular domain of Notch proteins by catalyzing the addition of xylose. In Gallus gallus (Chicken), this protein is Glucoside xylosyltransferase 1 (GXYLT1).